The following is a 227-amino-acid chain: Testis-expressed protein 30 (227 aa).

This Homo sapiens (Human) protein is Testis-expressed protein 30 (TEX30).